The chain runs to 307 residues: Phosphate import ATP-binding protein PstB (307 aa).

Residues 1–30 are disordered; it reads MSETTYTTTEDTDDTNSTDSMVGTTTGETD. Residues 48-302 enclose the ABC transporter domain; it reads LGVDDLDVYY…PQSERVEDYI (255 aa). An ATP-binding site is contributed by 80 to 87; it reads GPSGCGKS.

Belongs to the ABC transporter superfamily. Phosphate importer (TC 3.A.1.7) family. In terms of assembly, the complex is composed of two ATP-binding proteins (PstB), two transmembrane proteins (PstC and PstA) and a solute-binding protein (PstS).

It localises to the cell membrane. The catalysed reaction is phosphate(out) + ATP + H2O = ADP + 2 phosphate(in) + H(+). In terms of biological role, part of the ABC transporter complex PstSACB involved in phosphate import. Responsible for energy coupling to the transport system. The protein is Phosphate import ATP-binding protein PstB of Haloquadratum walsbyi (strain DSM 16790 / HBSQ001).